The following is a 382-amino-acid chain: Glutamyl-tRNA reductase (382 aa).

Substrate is bound by residues 38 to 41 (TCNR), S85, 90 to 92 (ENQ), and Q96. C39 functions as the Nucleophile in the catalytic mechanism. 164–169 (GAGEIG) contributes to the NADP(+) binding site.

The protein belongs to the glutamyl-tRNA reductase family. In terms of assembly, homodimer.

It catalyses the reaction (S)-4-amino-5-oxopentanoate + tRNA(Glu) + NADP(+) = L-glutamyl-tRNA(Glu) + NADPH + H(+). It functions in the pathway porphyrin-containing compound metabolism; protoporphyrin-IX biosynthesis; 5-aminolevulinate from L-glutamyl-tRNA(Glu): step 1/2. Its function is as follows. Catalyzes the NADPH-dependent reduction of glutamyl-tRNA(Glu) to glutamate 1-semialdehyde (GSA). This chain is Glutamyl-tRNA reductase, found in Methanococcus maripaludis (strain DSM 14266 / JCM 13030 / NBRC 101832 / S2 / LL).